The sequence spans 913 residues: Protein translocase subunit SecA (913 aa).

ATP contacts are provided by residues Gln-87, 105–109, and Asp-512; that span reads GEGKT. Cys-897, Cys-899, Cys-908, and His-909 together coordinate Zn(2+).

It belongs to the SecA family. As to quaternary structure, monomer and homodimer. Part of the essential Sec protein translocation apparatus which comprises SecA, SecYEG and auxiliary proteins SecDF-YajC and YidC. It depends on Zn(2+) as a cofactor.

Its subcellular location is the cell inner membrane. The protein resides in the cytoplasm. It catalyses the reaction ATP + H2O + cellular proteinSide 1 = ADP + phosphate + cellular proteinSide 2.. Part of the Sec protein translocase complex. Interacts with the SecYEG preprotein conducting channel. Has a central role in coupling the hydrolysis of ATP to the transfer of proteins into and across the cell membrane, serving both as a receptor for the preprotein-SecB complex and as an ATP-driven molecular motor driving the stepwise translocation of polypeptide chains across the membrane. The protein is Protein translocase subunit SecA of Pseudomonas savastanoi pv. phaseolicola (strain 1448A / Race 6) (Pseudomonas syringae pv. phaseolicola (strain 1448A / Race 6)).